Consider the following 76-residue polypeptide: Sec-independent protein translocase protein TatA (76 aa).

A helical membrane pass occupies residues 1-21 (MGGISITQLLIIVAIVVLLFG). Residues 45 to 76 (DDNKEKDAEFKSLSDDSETTAKTEKAKDKEQA) form a disordered region.

The protein belongs to the TatA/E family. The Tat system comprises two distinct complexes: a TatABC complex, containing multiple copies of TatA, TatB and TatC subunits, and a separate TatA complex, containing only TatA subunits. Substrates initially bind to the TatABC complex, which probably triggers association of the separate TatA complex to form the active translocon.

It localises to the cell inner membrane. Its function is as follows. Part of the twin-arginine translocation (Tat) system that transports large folded proteins containing a characteristic twin-arginine motif in their signal peptide across membranes. TatA could form the protein-conducting channel of the Tat system. This Pasteurella multocida (strain Pm70) protein is Sec-independent protein translocase protein TatA.